The following is a 229-amino-acid chain: uncharacterized protein (229 aa).

The region spanning 2–69 (QRLAKIISNA…KPRLWIYYKP (68 aa)) is the S4 RNA-binding domain. Residue Asp-102 is the Nucleophile of the active site.

This sequence belongs to the pseudouridine synthase RsuA family.

It carries out the reaction a uridine in RNA = a pseudouridine in RNA. This is an uncharacterized protein from Rickettsia felis (strain ATCC VR-1525 / URRWXCal2) (Rickettsia azadi).